Consider the following 473-residue polypeptide: BPI fold-containing family B member 3 (473 aa).

Positions 1–20 (MMPGVYALLLLWGLATPCLG) are cleaved as a signal peptide. A glycan (N-linked (GlcNAc...) asparagine) is linked at N139. C161 and C196 are disulfide-bonded.

Belongs to the BPI/LBP/Plunc superfamily. BPI/LBP family. In terms of tissue distribution, highly expressed in olfactory mucosa but undetectable in thymus, kidney, lung, brain, spleen and liver.

Its subcellular location is the secreted. May have the capacity to recognize and bind specific classes of odorants. May act as a carrier molecule, transporting odorants across the mucus layer to access receptor sites. May serve as a primary defense mechanism by recognizing and removing potentially harmful odorants or pathogenic microorganisms from the mucosa or clearing excess odorant from mucus to enable new odorant stimuli to be received. The sequence is that of BPI fold-containing family B member 3 from Rattus norvegicus (Rat).